A 282-amino-acid chain; its full sequence is Tyrosine recombinase XerA (282 aa).

One can recognise a Core-binding (CB) domain in the interval 2–79 (EAINEVIEEY…ALRSYFRFEG (78 aa)). The 177-residue stretch at 95–271 (SLPKSLTREE…TVEHLRKAQE (177 aa)) folds into the Tyr recombinase domain. Catalysis depends on residues Arg-132, Lys-157, His-223, Arg-226, and His-249. The active-site O-(3'-phospho-DNA)-tyrosine intermediate is Tyr-258.

Belongs to the 'phage' integrase family. XerA subfamily.

Its subcellular location is the cytoplasm. Site-specific tyrosine recombinase, which acts by catalyzing the cutting and rejoining of the recombining DNA molecules. This is Tyrosine recombinase XerA from Thermococcus onnurineus (strain NA1).